Reading from the N-terminus, the 273-residue chain is 5-deoxy-glucuronate isomerase (273 aa).

The protein belongs to the isomerase IolB family.

The enzyme catalyses 5-deoxy-D-glucuronate = 5-dehydro-2-deoxy-D-gluconate. Its pathway is polyol metabolism; myo-inositol degradation into acetyl-CoA; acetyl-CoA from myo-inositol: step 4/7. Its function is as follows. Involved in the isomerization of 5-deoxy-glucuronate (5DG) to 5-dehydro-2-deoxy-D-gluconate (DKG or 2-deoxy-5-keto-D-gluconate). In Listeria monocytogenes serotype 4b (strain CLIP80459), this protein is 5-deoxy-glucuronate isomerase.